The sequence spans 194 residues: Glycerol-3-phosphate acyltransferase (194 aa).

The next 5 helical transmembrane spans lie at 2-22, 51-71, 80-100, 112-132, and 155-175; these read LIEILLLAGAYLLGSIPTGLL, SVGIATLVGDCLKGLIPVLAA, WIALAGLAAFLGHVYTVFLGF, VFLGLAPLAVLIALGIFVAVV, and FLSGRPPLVGVTVVIALLVIW.

This sequence belongs to the PlsY family. Probably interacts with PlsX.

It localises to the cell inner membrane. The catalysed reaction is an acyl phosphate + sn-glycerol 3-phosphate = a 1-acyl-sn-glycero-3-phosphate + phosphate. The protein operates within lipid metabolism; phospholipid metabolism. Catalyzes the transfer of an acyl group from acyl-phosphate (acyl-PO(4)) to glycerol-3-phosphate (G3P) to form lysophosphatidic acid (LPA). This enzyme utilizes acyl-phosphate as fatty acyl donor, but not acyl-CoA or acyl-ACP. This chain is Glycerol-3-phosphate acyltransferase, found in Geobacter metallireducens (strain ATCC 53774 / DSM 7210 / GS-15).